Reading from the N-terminus, the 683-residue chain is Methionine--tRNA ligase (683 aa).

A 'HIGH' region motif is present at residues 14 to 24 (PYANGSIHLGH). 4 residues coordinate Zn(2+): Cys-145, Cys-148, Cys-158, and Cys-161. A 'KMSKS' region motif is present at residues 331-335 (KMSKS). An ATP-binding site is contributed by Lys-334. Positions 581–683 (AFAAVDLRVA…SGAKPGQRIK (103 aa)) constitute a tRNA-binding domain.

Belongs to the class-I aminoacyl-tRNA synthetase family. MetG type 1 subfamily. Homodimer. The cofactor is Zn(2+).

Its subcellular location is the cytoplasm. It carries out the reaction tRNA(Met) + L-methionine + ATP = L-methionyl-tRNA(Met) + AMP + diphosphate. Its function is as follows. Is required not only for elongation of protein synthesis but also for the initiation of all mRNA translation through initiator tRNA(fMet) aminoacylation. The chain is Methionine--tRNA ligase from Pseudomonas fluorescens (strain SBW25).